Reading from the N-terminus, the 459-residue chain is ATP-binding protein Uup-like (459 aa).

Residues 132–350 enclose the ABC transporter domain; the sequence is FEMEDVSYEI…QQANFWASKA (219 aa). Position 164–171 (164–171) interacts with ATP; it reads GPNGCGKT. A compositionally biased stretch (basic and acidic residues) spans 357 to 375; sequence AKKSEPLKEESAVKNDRTS. A disordered region spans residues 357–381; sequence AKKSEPLKEESAVKNDRTSKPKSVK.

Belongs to the ABC transporter superfamily. ABCF family. Uup subfamily.

It localises to the cytoplasm. It catalyses the reaction ATP + H2O = ADP + phosphate + H(+). Functionally, might play a role in ribosome assembly or function; this is missing the first ABC transporter domain compared to paralogs. In Haemophilus influenzae (strain ATCC 51907 / DSM 11121 / KW20 / Rd), this protein is ATP-binding protein Uup-like (uup-B).